Here is a 162-residue protein sequence, read N- to C-terminus: uncharacterized protein (162 aa).

The tract at residues Met-1–Ile-49 is disordered. Positions Ser-32–Asp-46 are enriched in polar residues. The helical transmembrane segment at Met-62 to Ile-82 threads the bilayer.

The protein resides in the membrane. This is an uncharacterized protein from Homo sapiens (Human).